A 419-amino-acid polypeptide reads, in one-letter code: MTTQLEQAWELAKQRFAAVGIDVEEALRQLDRLPVSMHCWQSDDVSGFENPEGLLTGGIQATGNYPGKARNASELRADLEQAMRLIPGPKRLNLHAIYLESDTPVSRDQIKPEHFKNWVEWAKANQLGLDFNPSCFSHPLSADGFTLSHADDRIRQFWIDHCKASRRVSAYFGEQLGTPSVMNIWIPDGMKDITVDRLAPRQRLLAALDEVISEKLNPAHHIDAVESKLFGIGAESYTVGSNEFYLGYATSRQTALCLDAGHFHPTEVISDKISAAMLYVPQLLLHVSRPVRWDSDHVVLLDDETQAIASEIVRHDLFDQVHIGLDFFDASINRIAAWVIGTRNMKKALLRALLEPTAELRKLEAAGDYTARLALLEEQKSLPWQAVWEMYCQRHDTPAGSEWLENVRTYEKEILSRRG.

His-262, Asp-294, and Asp-296 together coordinate Mn(2+).

This sequence belongs to the rhamnose isomerase family. Homotetramer. It depends on Mn(2+) as a cofactor.

The protein localises to the cytoplasm. It catalyses the reaction L-rhamnopyranose = L-rhamnulose. Its pathway is carbohydrate degradation; L-rhamnose degradation; glycerone phosphate from L-rhamnose: step 1/3. In terms of biological role, catalyzes the interconversion of L-rhamnose and L-rhamnulose. The polypeptide is L-rhamnose isomerase (Escherichia coli O81 (strain ED1a)).